The chain runs to 108 residues: Cell wall protein PGA48 (108 aa).

A signal peptide spans Met1–Ala17. Asn18, Asn41, and Asn77 each carry an N-linked (GlcNAc...) asparagine glycan. Asn84 is lipidated: GPI-anchor amidated asparagine. Residues Gly85 to Ile108 constitute a propeptide, removed in mature form.

The protein belongs to the SED1 family. Post-translationally, the GPI-anchor is attached to the protein in the endoplasmic reticulum and serves to target the protein to the cell surface. There, the glucosamine-inositol phospholipid moiety is cleaved off and the GPI-modified mannoprotein is covalently attached via its lipidless GPI glycan remnant to the 1,6-beta-glucan of the outer cell wall layer.

Its subcellular location is the secreted. The protein resides in the cell wall. The protein localises to the membrane. In terms of biological role, cell wall protein that plays a role in adaptation and resistance to cell wall stress. This is Cell wall protein PGA48 (PGA48) from Candida albicans (strain SC5314 / ATCC MYA-2876) (Yeast).